We begin with the raw amino-acid sequence, 66 residues long: Putative membrane protein insertion efficiency factor (66 aa).

This sequence belongs to the UPF0161 family.

Its subcellular location is the cell inner membrane. Could be involved in insertion of integral membrane proteins into the membrane. The protein is Putative membrane protein insertion efficiency factor of Parasynechococcus marenigrum (strain WH8102).